The sequence spans 95 residues: DNA/RNA-binding protein Alba (95 aa).

Position 13 is an N6-acetyllysine (lysine 13).

It belongs to the histone-like Alba family. Acetylated. Acetylation at Lys-13 decreases DNA-binding affinity.

Its subcellular location is the cytoplasm. The protein resides in the chromosome. Its function is as follows. Binds double-stranded DNA tightly but without sequence specificity. Involved in DNA compaction. This Nitrosopumilus maritimus (strain SCM1) protein is DNA/RNA-binding protein Alba.